We begin with the raw amino-acid sequence, 427 residues long: Adenylosuccinate synthetase (427 aa).

GTP-binding positions include 12 to 18 (GDEGKGK) and 40 to 42 (GHT). The active-site Proton acceptor is the Asp13. Residues Asp13 and Gly40 each contribute to the Mg(2+) site. Residues 13–16 (DEGK), 38–41 (NAGH), Thr128, Arg142, Gln223, Thr238, and Arg302 each bind IMP. The Proton donor role is filled by His41. Position 298-304 (298-304 (TTTGRPR)) interacts with substrate. GTP contacts are provided by residues Arg304, 330 to 332 (KLD), and 412 to 414 (AVG).

The protein belongs to the adenylosuccinate synthetase family. Homodimer. It depends on Mg(2+) as a cofactor.

The protein resides in the cytoplasm. The enzyme catalyses IMP + L-aspartate + GTP = N(6)-(1,2-dicarboxyethyl)-AMP + GDP + phosphate + 2 H(+). The protein operates within purine metabolism; AMP biosynthesis via de novo pathway; AMP from IMP: step 1/2. Functionally, plays an important role in the de novo pathway of purine nucleotide biosynthesis. Catalyzes the first committed step in the biosynthesis of AMP from IMP. The protein is Adenylosuccinate synthetase of Heliobacterium modesticaldum (strain ATCC 51547 / Ice1).